A 504-amino-acid chain; its full sequence is Potassium voltage-gated channel subfamily V member 1 (504 aa).

Disordered stretches follow at residues 1 to 22 and 172 to 193; these read MDLS…GGSL and KKDT…QGPC. Over 1–214 the chain is Cytoplasmic; that stretch reads MDLSPRNRPL…EKPGSSTAAR (214 aa). Residues 10-22 show a composition bias toward low complexity; sequence LLESSSLDSGGSL. Residues 172-185 show a composition bias toward basic and acidic residues; the sequence is KKDTDDQESQHESE. Residues 215–235 form a helical membrane-spanning segment; it reads IFGVISIIFVAVSIVNMALMS. Residues 236–242 are Extracellular-facing; sequence AELSWLN. The helical transmembrane segment at 243–263 threads the bilayer; the sequence is LQLLEILEYVCISWFTGEFIL. The Cytoplasmic portion of the chain corresponds to 264–280; sequence RFLCVKDRCRFLRKVPN. A helical transmembrane segment spans residues 281-301; sequence IIDLLAILPFYITLLVESLSG. Over 302–313 the chain is Extracellular; it reads SHTTQELENVGR. The chain crosses the membrane as a helical; Voltage-sensor span at residues 314–335; sequence LVQVLRLLRALRMLKLGRHSTG. Residues 336 to 349 lie on the Cytoplasmic side of the membrane; it reads LRSLGMTITQCYEE. The helical transmembrane segment at 350–370 threads the bilayer; that stretch reads VGLLLLFLSVGISIFSTIEYF. The Selectivity filter motif lies at 396–401; the sequence is TVGYGD. The helical transmembrane segment at 411–431 threads the bilayer; that stretch reads IVAFMCILSGILVLALPIAII. At 432–504 the chain is on the cytoplasmic side; sequence NDRFSACYFT…RSSGGDDFWF (73 aa).

Belongs to the potassium channel family. V (TC 1.A.1.2) subfamily. Kv8.1/KCNV1 sub-subfamily. As to quaternary structure, heteromultimer with KCNB1 and KCNB2. Interacts with KCNC4 and KCND1. As to expression, detected in brain, throughout layers II, IV and VI of the brain cortex. Detected in cerebellum and hippocampus, in the granule cell layer, Purkinje cell layer, pyramidal cell layer and dentate gyrus. Detected at lower levels in olfactory bulb, amygdala, thalamus, hypothalamus, midbrain and brainstem.

The protein localises to the cell membrane. In terms of biological role, potassium channel subunit that does not form functional channels by itself. Modulates KCNB1 and KCNB2 channel activity by shifting the threshold for inactivation to more negative values and by slowing the rate of inactivation. Can down-regulate the channel activity of KCNB1, KCNB2, KCNC4 and KCND1, possibly by trapping them in intracellular membranes. In Mesocricetus auratus (Golden hamster), this protein is Potassium voltage-gated channel subfamily V member 1 (KCNV1).